The following is a 184-amino-acid chain: MNWRSKRIWIELITGSRKISNFCWAFILFLGSLGFLLVGISSYLGRNLISLFPPQQILFFPQGIVMSFYGIAGLFISSYLWCTISWNVGSGYDRFDRKEGIVCIFRWGFPGKNRRIFLRFLIKDIQSIRIELKEGIYTRRVLYLEIRGQGAIPLTRTDDNLTPREIEQKAAELAYFLRIPIEVF.

A run of 2 helical transmembrane segments spans residues 21–43 (NFCWAFILFLGSLGFLLVGISSY) and 58–80 (LFFPQGIVMSFYGIAGLFISSYL).

This sequence belongs to the Ycf4 family.

It localises to the plastid. The protein localises to the chloroplast thylakoid membrane. In terms of biological role, seems to be required for the assembly of the photosystem I complex. The protein is Photosystem I assembly protein Ycf4 of Carpobrotus chilensis (Sea fig).